We begin with the raw amino-acid sequence, 355 residues long: Peptide chain release factor 1 (355 aa).

Position 233 is an N5-methylglutamine (Gln-233).

The protein belongs to the prokaryotic/mitochondrial release factor family. Methylated by PrmC. Methylation increases the termination efficiency of RF1.

It localises to the cytoplasm. Functionally, peptide chain release factor 1 directs the termination of translation in response to the peptide chain termination codons UAG and UAA. This Amoebophilus asiaticus (strain 5a2) protein is Peptide chain release factor 1.